Consider the following 336-residue polypeptide: DNA-directed RNA polymerase subunit alpha (336 aa).

The tract at residues 1–226 (MLIAQRPTLS…ELFGLARELN (226 aa)) is alpha N-terminal domain (alpha-NTD). Residues 241 to 336 (AALAADMALP…DDAAFSDDEL (96 aa)) form an alpha C-terminal domain (alpha-CTD) region.

Belongs to the RNA polymerase alpha chain family. As to quaternary structure, homodimer. The RNAP catalytic core consists of 2 alpha, 1 beta, 1 beta' and 1 omega subunit. When a sigma factor is associated with the core the holoenzyme is formed, which can initiate transcription.

It carries out the reaction RNA(n) + a ribonucleoside 5'-triphosphate = RNA(n+1) + diphosphate. DNA-dependent RNA polymerase catalyzes the transcription of DNA into RNA using the four ribonucleoside triphosphates as substrates. This is DNA-directed RNA polymerase subunit alpha from Arthrobacter sp. (strain FB24).